The following is a 73-amino-acid chain: Cell division protein ZapB (73 aa).

The stretch at 3–66 (LELLSKLETK…SWNEKVTGLV (64 aa)) forms a coiled coil.

It belongs to the ZapB family. In terms of assembly, homodimer. The ends of the coiled-coil dimer bind to each other, forming polymers. Interacts with FtsZ.

The protein localises to the cytoplasm. Its function is as follows. Non-essential, abundant cell division factor that is required for proper Z-ring formation. It is recruited early to the divisome by direct interaction with FtsZ, stimulating Z-ring assembly and thereby promoting cell division earlier in the cell cycle. Its recruitment to the Z-ring requires functional FtsA or ZipA. This is Cell division protein ZapB from Shewanella baltica (strain OS223).